The sequence spans 356 residues: Histidinol-phosphate aminotransferase (356 aa).

An N6-(pyridoxal phosphate)lysine modification is found at lysine 210.

Belongs to the class-II pyridoxal-phosphate-dependent aminotransferase family. Histidinol-phosphate aminotransferase subfamily. Homodimer. The cofactor is pyridoxal 5'-phosphate.

The enzyme catalyses L-histidinol phosphate + 2-oxoglutarate = 3-(imidazol-4-yl)-2-oxopropyl phosphate + L-glutamate. The protein operates within amino-acid biosynthesis; L-histidine biosynthesis; L-histidine from 5-phospho-alpha-D-ribose 1-diphosphate: step 7/9. The polypeptide is Histidinol-phosphate aminotransferase (Gluconacetobacter diazotrophicus (strain ATCC 49037 / DSM 5601 / CCUG 37298 / CIP 103539 / LMG 7603 / PAl5)).